Reading from the N-terminus, the 226-residue chain is Survival motor neuron protein (226 aa).

The span at 35–44 shows a compositional bias: basic and acidic residues; it reads ADSTNKREEE. The interval 35–68 is disordered; that stretch reads ADSTNKREEENAAAAEEEAGEISATGGATSPEPV. The Tudor domain occupies 69-128; the sequence is SFKVGDYARATYVDGVDYEGAVVSINEEKGTCVLRYLGYENEQEVLLVDLLPSWGKRVRR. A disordered region spans residues 137-172; the sequence is DEDEQLSRPKASAGSHSKTPKSSRRSRISGGLVMPP. Basic residues predominate over residues 154–163; the sequence is KTPKSSRRSR. Positions 159–226 are required for homodimerization; that stretch reads SRRSRISGGL…TSGKKKTPKK (68 aa).

It belongs to the SMN family. Homodimer (via C-terminal region). Component of the core survival motor neuron (SMN) complex composed of Smn, Gem2, Gem3, rig/Gem5 and one of 3 almost identical Gem4 paralogs encoded by Glos/Gem4a, Gem4b or Gem4c. Interacts with Gem3 (via C-terminus); the interaction is direct and stabilizes Smn. Part of a minimal SMN complex composed of Smn and Gem2 only; this complex is active in UsnRNP assembly. The SMN complex associates with the entire set of spliceosomal snRNP Sm proteins, SmB, SmD1, SmD2, SmD3, SmE, SmF and SmG, and with the snRNP-specific proteins snRNP-U1-70K, U2A, snf/U1A and U5-116KD. Interacts with Glos/Gem4a; the interaction is probably indirect. Interacts with Sbat and Vlet; Sbat and Vlet, along with Hez, may form an accessory subcomplex involved in SMN complex function. Interacts weakly with Gem3. Interacts with SmB and SmD1; the interaction is favored by methylation of the Sm proteins. Interacts with Actn; the interaction occurs in thoracic tissues and in adult flies. Interacts with Rpp20. Interacts with msk and Snup; these interactions are RNA-dependent. As to expression, in late first instar larvae, expressed in pNBs. Expression increases as the pNBs enlarge, with the highest accumulation observed in dividing pNBs of second and third instar larvae. Enriched in type ID (thoracic and brain lobe), type IA and all the mira-expressing NBs of the brain lobes. In larvae, also expressed in muscle fibers. In larval and adult testis, expressed in germline stem cells and gonialblast, expression decreases as cells differentiate into cysts and spermatocytes. In adult fly thorax, expressed in the IFMs. In adult ovary, expressed in germline stem cells, cystoblasts, follicle cells, nurse cells and oocyte (at protein level). Also expressed in larval salivary glands.

The protein resides in the cytoplasm. It localises to the nucleus. It is found in the U-body. The protein localises to the gem. Its subcellular location is the cajal body. The protein resides in the myofibril. It localises to the sarcomere. It is found in the i band. The protein localises to the z line. Core component of the survival motor neuron (SMN) complex that plays an essential role in spliceosomal small nuclear ribonucleoprotein (snRNP) assembly in the cytoplasm, is required for pre-mRNA splicing in the nucleus and acts as a chaperone that discriminates target and non-target RNAs of Sm proteins. A major component of nuclear bodies known as gems (gemini of Cajal bodies) thought to be storage depots of excess SMN complexes. Required for normal expression of spliceosomal snRNAs and for U12 intron splicing. Required in cholinergic neurons, but not in motor neurons, to ensure correct splicing and proper levels of stas mRNA and normal neurotransmitter release by motor neurons. However, Smn is required in motor neurons, but not in cholinergic neurons, for normal motor behavior but plays no role in synaptic transmission according to a report. In both muscle and neurons, required for the formation of a normal neuromuscular junction (NMJ) structure. Plays a neuron-specific role in long-term homeostatic compensation at the larval NMJ. In the thorax of adult flies, required for Act88F, an indirect flight muscle (IFM)-specific actin, expression and for proper IFM myofibril formation. In nurse cells, oocytes and follicle cells, required to maintain normal organization of nuclear compartments including chromosomes, nucleoli, Cajal bodies, histone locus bodies and heterochromatin. Required for the functional integrity of the cytoplasmic U snRNP body (U body) and P body. Required in dividing postembryonic neuroblasts (pNBs) for the correct basal localization of mira. The tight regulation of its expression is critical for stem cell division, proliferation and differentiation in male germline and developing central nervous system (CNS). Required for tracheal terminal cell lumen formation. This chain is Survival motor neuron protein, found in Drosophila melanogaster (Fruit fly).